The sequence spans 216 residues: Adenylate kinase (216 aa).

13-18 lines the ATP pocket; it reads GAGKGT. Residues 33 to 66 form an NMP region; that stretch reads TTGDALRANKTKDITHLDVEYDTPGAYMDAGELV. Residues Thr-34, Arg-39, 64-66, 89-92, and Gln-96 contribute to the AMP site; these read ELV and GYPR. Residues 125-162 are LID; it reads GRRVCEDCGATFHVSFNQPETEGVCDACGGSLYQREDD. Arg-126 provides a ligand contact to ATP. Positions 129 and 132 each coordinate Zn(2+). 135–136 serves as a coordination point for ATP; the sequence is TF. Zn(2+) contacts are provided by Cys-149 and Cys-152. Arg-159 and Arg-170 together coordinate AMP. Arg-198 contributes to the ATP binding site.

The protein belongs to the adenylate kinase family. Monomer.

It localises to the cytoplasm. The enzyme catalyses AMP + ATP = 2 ADP. It participates in purine metabolism; AMP biosynthesis via salvage pathway; AMP from ADP: step 1/1. In terms of biological role, catalyzes the reversible transfer of the terminal phosphate group between ATP and AMP. Plays an important role in cellular energy homeostasis and in adenine nucleotide metabolism. This is Adenylate kinase from Halobacterium salinarum (strain ATCC 700922 / JCM 11081 / NRC-1) (Halobacterium halobium).